The chain runs to 678 residues: MLGAMAEEAVAPVAVPTTQEQPTSQPAAAQVTTVTSPSVTATAAAATAAVASPQANGNAASPVAPASSTSRPAEELTCMWQGCSEKLPTPESLYEHVCERHVGRKSTNNLNLTCQWGSCRTTTVKRDHITSHIRVHVPLKPHKCDFCGKAFKRPQDLKKHVKTHADDSVLVRSPEPGSRNPDMMFGGNGKGYAAAHYFEPALNPVPSQGYAHGPPQYYQAHHAPQPSNPSYGNVYYALNTGPEPHQASYESKKRGYDALNEFFGDLKRRQFDPNSYAAVGQRLLSLQNLSLPVLTAAPLPEYQAMPAPVAVASGPYGGGPHPAPAYHLPPMSNVRTKNDLINIDQFLQQMQDTIYENDDNVAAAGVAQPGAHYIHNGISYRTTHSPPTQLPSAHATTQTTAGPIISNTSAHSPSSSTPALTPPSSAQSYTSGRSPISLPSAHRVSPPHESGSSMYPRLPSATDGMTSGYTAASSAAPPSTLGGIFDNDERRRYTGGTLQRARPASRAASESMDLSSDDKESGERTPKQISASLIDPALHSGSPGEDDVTRTAKAATEVAERSDVQSEWVEKVRLIEYLRNYIANRLERGEFSDDSEQEQDQEQEQDQEQEQDQEQGQDRVSRSPVSKADVDMEGVERDSLPRSPRTVPIKTDGESAEDSVMYPTLRGLDEDGDSKMPS.

Disordered regions lie at residues 1 to 31 and 51 to 70; these read MLGA…AAQV and ASPQ…SSTS. 3 C2H2-type zinc fingers span residues 76 to 101, 112 to 136, and 142 to 164; these read LTCM…CERH, LTCQ…IRVH, and HKCD…VKTH. The short motif at 158-164 is the Nuclear localization signal element; it reads KKHVKTH. The segment at 169-301 is interacting region A; sequence VLVRSPEPGS…PVLTAAPLPE (133 aa). The segment at 252-254 is processing protease cleavage; it reads KKR. A propeptide spans 253–493 (removed in open form 1; by processing protease); that stretch reads KRGYDALNEF…IFDNDERRRY (241 aa). Positions 334–410 are interacting region B; that stretch reads VRTKNDLINI…AGPIISNTSA (77 aa). 2 disordered regions span residues 377-565 and 590-678; these read GISY…SDVQ and EFSD…KMPS. Polar residues predominate over residues 379–401; it reads SYRTTHSPPTQLPSAHATTQTTA. Residues 406-428 show a composition bias toward low complexity; it reads SNTSAHSPSSSTPALTPPSSAQS. The YPX[LI] motif 1 motif lies at 455–458; that stretch reads YPRL. The tract at residues 479–502 is signaling protease box; the sequence is STLGGIFDNDERRRYTGGTLQRAR. The tract at residues 493–500 is signaling protease cleavage; that stretch reads YTGGTLQR. Positions 494–678 are cleaved as a propeptide — removed in open form 2; by signaling protease; it reads TGGTLQRARP…DEDGDSKMPS (185 aa). Over residues 500-511 the composition is skewed to low complexity; that stretch reads RARPASRAASES. Residues 516–526 show a composition bias toward basic and acidic residues; it reads SDDKESGERTP. The segment at 529–592 is interacting region C; the sequence is ISASLIDPAL…ANRLERGEFS (64 aa). Positions 592–615 are enriched in acidic residues; the sequence is SDDSEQEQDQEQEQDQEQEQDQEQ. Over residues 628–640 the composition is skewed to basic and acidic residues; that stretch reads ADVDMEGVERDSL. A YPX[LI] motif 2 motif is present at residues 662–665; the sequence is YPTL.

Belongs to the pacC/RIM101 family. Binds to DNA. Interacts with palA, which binds to the two YPX[LI] motifs and is required for proteolytic processing. Post-translationally, activated by C-terminal proteolytic cleavage. At neutral to alkaline ambient pH, the signaling protease (probably palB) cleaves pacC within the conserved 24-residue signaling protease box, removing the C-terminal interacting region C and producing a 53 kDa 'open' conformation intermediate protein, which is committed to further processing. In an ambient pH-independent reaction, the processing protease (probably the proteasome) removes additional C-terminal residues to yield the 27 kDa functional form.

It localises to the cytoplasm. The protein resides in the nucleus. In terms of biological role, transcription factor that mediates regulation of both acid- and alkaline-expressed genes in response to ambient pH. At alkaline ambient pH, activates transcription of alkaline-expressed genes (including pacC itself) and represses transcription of acid-expressed genes. Specifically recognizes and binds the consensus sequence 5'-GCCARG-3'. Required for virulence in invasive pulmonary aspergillosis (IPA). The protein is pH-response transcription factor pacC/RIM101 (pacC) of Emericella nidulans (strain FGSC A4 / ATCC 38163 / CBS 112.46 / NRRL 194 / M139) (Aspergillus nidulans).